Reading from the N-terminus, the 171-residue chain is Shikimate kinase (171 aa).

13–18 (GVGKST) contributes to the ATP binding site. Ser-17 is a binding site for Mg(2+). Substrate is bound by residues Asp-35, Arg-59, and Gly-81. Arg-118 contributes to the ATP binding site. Arg-136 serves as a coordination point for substrate. Arg-153 serves as a coordination point for ATP.

It belongs to the shikimate kinase family. In terms of assembly, monomer. Requires Mg(2+) as cofactor.

It localises to the cytoplasm. The catalysed reaction is shikimate + ATP = 3-phosphoshikimate + ADP + H(+). The protein operates within metabolic intermediate biosynthesis; chorismate biosynthesis; chorismate from D-erythrose 4-phosphate and phosphoenolpyruvate: step 5/7. Catalyzes the specific phosphorylation of the 3-hydroxyl group of shikimic acid using ATP as a cosubstrate. This is Shikimate kinase from Streptomyces coelicolor (strain ATCC BAA-471 / A3(2) / M145).